The primary structure comprises 205 residues: Holliday junction branch migration complex subunit RuvA (205 aa).

The segment at 1–62 (MFEYVTGYVE…EDIMALYGFK (62 aa)) is domain I. Residues 63–141 (TREERLLFTK…DVVPDVFVDL (79 aa)) form a domain II region. Positions 142–152 (FSDEERFDEKK) are flexible linker. A domain III region spans residues 153–205 (GSSTELDEALEALRALGYAEREINRVLPELLKESLTTDQYIKKALSLLLNGKR).

This sequence belongs to the RuvA family. Homotetramer. Forms an RuvA(8)-RuvB(12)-Holliday junction (HJ) complex. HJ DNA is sandwiched between 2 RuvA tetramers; dsDNA enters through RuvA and exits via RuvB. An RuvB hexamer assembles on each DNA strand where it exits the tetramer. Each RuvB hexamer is contacted by two RuvA subunits (via domain III) on 2 adjacent RuvB subunits; this complex drives branch migration. In the full resolvosome a probable DNA-RuvA(4)-RuvB(12)-RuvC(2) complex forms which resolves the HJ.

The protein resides in the cytoplasm. Its function is as follows. The RuvA-RuvB-RuvC complex processes Holliday junction (HJ) DNA during genetic recombination and DNA repair, while the RuvA-RuvB complex plays an important role in the rescue of blocked DNA replication forks via replication fork reversal (RFR). RuvA specifically binds to HJ cruciform DNA, conferring on it an open structure. The RuvB hexamer acts as an ATP-dependent pump, pulling dsDNA into and through the RuvAB complex. HJ branch migration allows RuvC to scan DNA until it finds its consensus sequence, where it cleaves and resolves the cruciform DNA. This chain is Holliday junction branch migration complex subunit RuvA, found in Bacillus cytotoxicus (strain DSM 22905 / CIP 110041 / 391-98 / NVH 391-98).